Reading from the N-terminus, the 82-residue chain is MSDKIRTLQGRVTSNKMDKSITVAIERQVKHPLYGKYIKRTTKIHAHDETNQCNEGDVVTISQCRPLSKTKSWALVEVVTKA.

Belongs to the universal ribosomal protein uS17 family. In terms of assembly, part of the 30S ribosomal subunit.

In terms of biological role, one of the primary rRNA binding proteins, it binds specifically to the 5'-end of 16S ribosomal RNA. This chain is Small ribosomal subunit protein uS17, found in Shewanella denitrificans (strain OS217 / ATCC BAA-1090 / DSM 15013).